Consider the following 127-residue polypeptide: Spore germination protein 1 (127 aa).

An N-terminal signal peptide occupies residues 1–25; the sequence is MNIKNSLILIISTIFVLSMINGGLT. Residues Asn-54 and Asn-118 are each glycosylated (N-linked (GlcNAc...) asparagine).

This sequence belongs to the Dictyostelium gerABC family.

It localises to the secreted. The chain is Spore germination protein 1 (gerA) from Dictyostelium discoideum (Social amoeba).